We begin with the raw amino-acid sequence, 429 residues long: Glutamate-1-semialdehyde 2,1-aminomutase 2 (429 aa).

N6-(pyridoxal phosphate)lysine is present on Lys268.

The protein belongs to the class-III pyridoxal-phosphate-dependent aminotransferase family. HemL subfamily. As to quaternary structure, homodimer. The cofactor is pyridoxal 5'-phosphate.

The protein localises to the cytoplasm. It catalyses the reaction (S)-4-amino-5-oxopentanoate = 5-aminolevulinate. It functions in the pathway porphyrin-containing compound metabolism; protoporphyrin-IX biosynthesis; 5-aminolevulinate from L-glutamyl-tRNA(Glu): step 2/2. This is Glutamate-1-semialdehyde 2,1-aminomutase 2 from Staphylococcus aureus (strain USA300).